The sequence spans 74 residues: Small heat shock protein hspG10 (74 aa).

Residues Lys31–Ile74 form the sHSP domain.

It belongs to the small heat shock protein (HSP20) family.

The protein is Small heat shock protein hspG10 (hspG10) of Dictyostelium discoideum (Social amoeba).